We begin with the raw amino-acid sequence, 467 residues long: Methylenetetrahydrofolate--tRNA-(uracil-5-)-methyltransferase TrmFO (467 aa).

11–16 (GAGLAG) lines the FAD pocket.

It belongs to the MnmG family. TrmFO subfamily. Requires FAD as cofactor.

It is found in the cytoplasm. The catalysed reaction is uridine(54) in tRNA + (6R)-5,10-methylene-5,6,7,8-tetrahydrofolate + NADH + H(+) = 5-methyluridine(54) in tRNA + (6S)-5,6,7,8-tetrahydrofolate + NAD(+). It carries out the reaction uridine(54) in tRNA + (6R)-5,10-methylene-5,6,7,8-tetrahydrofolate + NADPH + H(+) = 5-methyluridine(54) in tRNA + (6S)-5,6,7,8-tetrahydrofolate + NADP(+). Its function is as follows. Catalyzes the folate-dependent formation of 5-methyl-uridine at position 54 (M-5-U54) in all tRNAs. This is Methylenetetrahydrofolate--tRNA-(uracil-5-)-methyltransferase TrmFO from Prochlorococcus marinus (strain NATL1A).